A 678-amino-acid chain; its full sequence is DNA ligase (678 aa).

Residues 47-51 (DSDYD), 96-97 (SL), and E122 each bind NAD(+). The N6-AMP-lysine intermediate role is filled by K124. NAD(+)-binding residues include R145, E182, K300, and K324. Residues C418, C421, C436, and C442 each coordinate Zn(2+). Positions 602–678 (AYNESFTGKT…ILEDNLKDLL (77 aa)) constitute a BRCT domain.

The protein belongs to the NAD-dependent DNA ligase family. LigA subfamily. Mg(2+) is required as a cofactor. It depends on Mn(2+) as a cofactor.

It catalyses the reaction NAD(+) + (deoxyribonucleotide)n-3'-hydroxyl + 5'-phospho-(deoxyribonucleotide)m = (deoxyribonucleotide)n+m + AMP + beta-nicotinamide D-nucleotide.. Its function is as follows. DNA ligase that catalyzes the formation of phosphodiester linkages between 5'-phosphoryl and 3'-hydroxyl groups in double-stranded DNA using NAD as a coenzyme and as the energy source for the reaction. It is essential for DNA replication and repair of damaged DNA. The protein is DNA ligase of Francisella tularensis subsp. holarctica (strain FTNF002-00 / FTA).